Here is a 96-residue protein sequence, read N- to C-terminus: Large ribosomal subunit protein uL23 (96 aa).

Belongs to the universal ribosomal protein uL23 family. Part of the 50S ribosomal subunit. Contacts protein L29, and trigger factor when it is bound to the ribosome.

One of the early assembly proteins it binds 23S rRNA. One of the proteins that surrounds the polypeptide exit tunnel on the outside of the ribosome. Forms the main docking site for trigger factor binding to the ribosome. This is Large ribosomal subunit protein uL23 from Alkaliphilus metalliredigens (strain QYMF).